The primary structure comprises 238 residues: Pre-protein VI (238 aa).

The propeptide occupies 1–33 (MDAVNFSILAPRYGSHPMMSAWSGIGTSDMNGG). Positions 34 to 54 (AFNWGGIWSGIKNFGSNVKNW) are amphipathic alpha-helix essential for membrane lytic activity. An involved in endosomal membrane lysis region spans residues 36–53 (NWGGIWSGIKNFGSNVKN). Residues 48-74 (GSNVKNWGSRAWNSQTGKLLRQKLNDT) form an interaction with hexon protein region. The Nuclear export signal motif lies at 67-76 (LRQKLNDTKV). A PPXY motif motif is present at residues 153–156 (PPSY). The disordered stretch occupies residues 187-212 (TLELKPSDQPPPYSPQSSNMPVTAPV). The short motif at 219–230 (GTLANIVGVGLS) is the Nuclear export signal element. Positions 221–227 (LANIVGV) are interaction with hexon protein. A binds to importin alpha/beta, involved in hexon nuclear import region spans residues 228–238 (GLSNVKRRRCF). Residues 233-236 (KRRR) carry the Nuclear localization signal motif.

It belongs to the adenoviridae protein VI family. Interacts with hexon protein; this interaction allows nuclear import of hexon trimers and possibly pre-capsid assembly. Interacts (via C-terminal NLS) with importin alpha/beta. In terms of assembly, interacts (via PPxY motif) with host NEDD4 ubiquitine ligase; this interaction might play a role in virus intracellular transport during entry. Part of a complex composed of the core-capsid bridging protein, the endosome lysis protein VI and the hexon-linking protein VIII; these interactions bridge the virus core to the capsid. Interacts with peripentonal hexons; this interaction stabilizes the capsid by gluing two peripentonal hexons together and joining them with an adjacent group-of-nine hexon. As to quaternary structure, heterodimer with the viral protease; disulfide-linked. Interacts with the viral protease. In terms of processing, ubiquitinated by Nedd4 following partial capsid disassembly; which might play a role in intracellular virus movement during entry. Contains the major nuclear import and export signals. Proteolytically removed during virion maturation. The processing of the C-terminus turns the precursor into a mature viral structural protein and abrogates its ability to promote hexon import and act as a potential chaperone protein.

It is found in the host nucleus. The protein resides in the host cytoplasm. The protein localises to the virion. Its function is as follows. During virus assembly, promotes hexon trimers nuclear import through nuclear pore complexes via an importin alpha/beta-dependent mechanism. By analogy to herpesviruses capsid assembly, might act as a chaperone to promote the formation of the icosahedral capsid. Functionally, structural component of the virion that provides increased stability to the particle shell through its interaction with the core-capsid bridging protein and the hexon-linking protein VIII. Fibers shedding during virus entry into host cell allows the endosome lysis protein to be exposed as a membrane-lytic peptide. Exhibits pH-independent membrane fragmentation activity and probably mediates viral rapid escape from host endosome via organellar membrane lysis. It is not clear if it then remains partially associated with the capsid and involved in the intracellular microtubule-dependent transport of capsid to the nucleus, or if it is lost during endosomal penetration. In terms of biological role, cofactor that activates the viral protease. Binds to viral protease in a 1:1 ratio. The polypeptide is Pre-protein VI (Canine adenovirus serotype 1 (strain CLL) (CAdV-1)).